Here is a 380-residue protein sequence, read N- to C-terminus: Chaperone protein DnaJ (380 aa).

Residues aspartate 4 to glycine 68 enclose the J domain. The span at lysine 27 to arginine 87 shows a compositional bias: basic and acidic residues. A disordered region spans residues lysine 27–aspartate 126. Residues glycine 88–glycine 100 are compositionally biased toward gly residues. The segment covering serine 115 to glycine 124 has biased composition (low complexity). The CR-type zinc finger occupies glycine 141 to glutamate 223. 8 residues coordinate Zn(2+): cysteine 154, cysteine 157, cysteine 171, cysteine 174, cysteine 197, cysteine 200, cysteine 211, and cysteine 214. 4 CXXCXGXG motif repeats span residues cysteine 154 to glycine 161, cysteine 171 to glycine 178, cysteine 197 to glycine 204, and cysteine 211 to glycine 218.

This sequence belongs to the DnaJ family. Homodimer. The cofactor is Zn(2+).

It localises to the cytoplasm. Its function is as follows. Participates actively in the response to hyperosmotic and heat shock by preventing the aggregation of stress-denatured proteins and by disaggregating proteins, also in an autonomous, DnaK-independent fashion. Unfolded proteins bind initially to DnaJ; upon interaction with the DnaJ-bound protein, DnaK hydrolyzes its bound ATP, resulting in the formation of a stable complex. GrpE releases ADP from DnaK; ATP binding to DnaK triggers the release of the substrate protein, thus completing the reaction cycle. Several rounds of ATP-dependent interactions between DnaJ, DnaK and GrpE are required for fully efficient folding. Also involved, together with DnaK and GrpE, in the DNA replication of plasmids through activation of initiation proteins. In Natronomonas pharaonis (strain ATCC 35678 / DSM 2160 / CIP 103997 / JCM 8858 / NBRC 14720 / NCIMB 2260 / Gabara) (Halobacterium pharaonis), this protein is Chaperone protein DnaJ.